Reading from the N-terminus, the 185-residue chain is Large ribosomal subunit protein uL5 (185 aa).

The protein belongs to the universal ribosomal protein uL5 family. Part of the 50S ribosomal subunit; part of the 5S rRNA/L5/L18/L25 subcomplex. Contacts the 5S rRNA and the P site tRNA. Forms a bridge to the 30S subunit in the 70S ribosome.

Functionally, this is one of the proteins that bind and probably mediate the attachment of the 5S RNA into the large ribosomal subunit, where it forms part of the central protuberance. In the 70S ribosome it contacts protein S13 of the 30S subunit (bridge B1b), connecting the 2 subunits; this bridge is implicated in subunit movement. Contacts the P site tRNA; the 5S rRNA and some of its associated proteins might help stabilize positioning of ribosome-bound tRNAs. In Parabacteroides distasonis (strain ATCC 8503 / DSM 20701 / CIP 104284 / JCM 5825 / NCTC 11152), this protein is Large ribosomal subunit protein uL5.